Consider the following 321-residue polypeptide: Aspartate carbamoyltransferase catalytic subunit (321 aa).

Carbamoyl phosphate is bound by residues Arg65 and Thr66. Residue Lys93 coordinates L-aspartate. Positions 115, 143, and 146 each coordinate carbamoyl phosphate. 2 residues coordinate L-aspartate: Arg176 and Arg230. Residues Gly271 and Pro272 each coordinate carbamoyl phosphate.

This sequence belongs to the aspartate/ornithine carbamoyltransferase superfamily. ATCase family. As to quaternary structure, heterododecamer (2C3:3R2) of six catalytic PyrB chains organized as two trimers (C3), and six regulatory PyrI chains organized as three dimers (R2).

The enzyme catalyses carbamoyl phosphate + L-aspartate = N-carbamoyl-L-aspartate + phosphate + H(+). Its pathway is pyrimidine metabolism; UMP biosynthesis via de novo pathway; (S)-dihydroorotate from bicarbonate: step 2/3. Functionally, catalyzes the condensation of carbamoyl phosphate and aspartate to form carbamoyl aspartate and inorganic phosphate, the committed step in the de novo pyrimidine nucleotide biosynthesis pathway. The sequence is that of Aspartate carbamoyltransferase catalytic subunit from Bartonella henselae (strain ATCC 49882 / DSM 28221 / CCUG 30454 / Houston 1) (Rochalimaea henselae).